A 905-amino-acid polypeptide reads, in one-letter code: DNA gyrase subunit A (905 aa).

Positions 35 to 524 (IPDVRDGLKP…GEFDQDIEDL (490 aa)) constitute a Topo IIA-type catalytic domain. Tyrosine 123 (O-(5'-phospho-DNA)-tyrosine intermediate) is an active-site residue. The GyrA-box signature appears at 551–557 (QKRGGKG). Positions 882–905 (IAESSDDNEEDSEFEEEVAEEGSE) are disordered. Residues 885–905 (SSDDNEEDSEFEEEVAEEGSE) show a composition bias toward acidic residues.

The protein belongs to the type II topoisomerase GyrA/ParC subunit family. In terms of assembly, heterotetramer, composed of two GyrA and two GyrB chains. In the heterotetramer, GyrA contains the active site tyrosine that forms a transient covalent intermediate with DNA, while GyrB binds cofactors and catalyzes ATP hydrolysis.

The protein localises to the cytoplasm. The enzyme catalyses ATP-dependent breakage, passage and rejoining of double-stranded DNA.. Functionally, a type II topoisomerase that negatively supercoils closed circular double-stranded (ds) DNA in an ATP-dependent manner to modulate DNA topology and maintain chromosomes in an underwound state. Negative supercoiling favors strand separation, and DNA replication, transcription, recombination and repair, all of which involve strand separation. Also able to catalyze the interconversion of other topological isomers of dsDNA rings, including catenanes and knotted rings. Type II topoisomerases break and join 2 DNA strands simultaneously in an ATP-dependent manner. The chain is DNA gyrase subunit A from Rickettsia bellii (strain RML369-C).